The chain runs to 30 residues: Cliotide T19 (30 aa).

Positions Gly-1–Asn-30 form a cross-link, cyclopeptide (Gly-Asn). Cystine bridges form between Cys-6–Cys-20, Cys-10–Cys-22, and Cys-15–Cys-27.

Post-translationally, contains 3 disulfide bonds. In terms of processing, this is a cyclic peptide. As to expression, expressed in root nodules but not in seed.

Functionally, probably participates in a plant defense mechanism. Active against Gram-negative bacterium E.coli ATCC 700926 (MIC=0.6 uM) under low-salt conditions. Not active against Gram-positive bacterium S.aureus ATCC 12600 up to a concentration of 100 uM under low-salt conditions. Exhibits immunomodulatory activity but no cytotoxicity in vitro. The chain is Cliotide T19 from Clitoria ternatea (Butterfly pea).